We begin with the raw amino-acid sequence, 166 residues long: Small ribosomal subunit protein uS9 (166 aa).

Acidic residues predominate over residues 1–16 (MSDTTNEVEETYEVDE). A disordered region spans residues 1 to 45 (MSDTTNEVEETYEVDEQGIAYSSESAPSADAPLRPATIAPANATG).

This sequence belongs to the universal ribosomal protein uS9 family.

This is Small ribosomal subunit protein uS9 from Nocardioides sp. (strain ATCC BAA-499 / JS614).